Here is a 261-residue protein sequence, read N- to C-terminus: Ribosomal RNA small subunit methyltransferase A (261 aa).

S-adenosyl-L-methionine is bound by residues Asn11, Leu13, Gly38, Glu59, Asp84, and Ser106.

Belongs to the class I-like SAM-binding methyltransferase superfamily. rRNA adenine N(6)-methyltransferase family. RsmA subfamily.

It is found in the cytoplasm. It carries out the reaction adenosine(1518)/adenosine(1519) in 16S rRNA + 4 S-adenosyl-L-methionine = N(6)-dimethyladenosine(1518)/N(6)-dimethyladenosine(1519) in 16S rRNA + 4 S-adenosyl-L-homocysteine + 4 H(+). Its function is as follows. Specifically dimethylates two adjacent adenosines (A1518 and A1519) in the loop of a conserved hairpin near the 3'-end of 16S rRNA in the 30S particle. May play a critical role in biogenesis of 30S subunits. The sequence is that of Ribosomal RNA small subunit methyltransferase A from Wigglesworthia glossinidia brevipalpis.